A 324-amino-acid chain; its full sequence is Glyoxylate/hydroxypyruvate reductase B (324 aa).

Residues Arg-237 and Glu-266 contribute to the active site. His-285 functions as the Proton donor in the catalytic mechanism.

This sequence belongs to the D-isomer specific 2-hydroxyacid dehydrogenase family. GhrB subfamily. Homodimer.

Its subcellular location is the cytoplasm. The enzyme catalyses glycolate + NADP(+) = glyoxylate + NADPH + H(+). It carries out the reaction (R)-glycerate + NAD(+) = 3-hydroxypyruvate + NADH + H(+). The catalysed reaction is (R)-glycerate + NADP(+) = 3-hydroxypyruvate + NADPH + H(+). Catalyzes the NADPH-dependent reduction of glyoxylate and hydroxypyruvate into glycolate and glycerate, respectively. This Shigella flexneri serotype 5b (strain 8401) protein is Glyoxylate/hydroxypyruvate reductase B.